A 354-amino-acid polypeptide reads, in one-letter code: Methylthioribose-1-phosphate isomerase (354 aa).

Substrate contacts are provided by residues 58–60, Arg101, and Gln204; that span reads RGA. Asp245 (proton donor) is an active-site residue. 255–256 lines the substrate pocket; it reads NK.

This sequence belongs to the eIF-2B alpha/beta/delta subunits family. MtnA subfamily.

It catalyses the reaction 5-(methylsulfanyl)-alpha-D-ribose 1-phosphate = 5-(methylsulfanyl)-D-ribulose 1-phosphate. Its pathway is amino-acid biosynthesis; L-methionine biosynthesis via salvage pathway; L-methionine from S-methyl-5-thio-alpha-D-ribose 1-phosphate: step 1/6. Functionally, catalyzes the interconversion of methylthioribose-1-phosphate (MTR-1-P) into methylthioribulose-1-phosphate (MTRu-1-P). The chain is Methylthioribose-1-phosphate isomerase from Xanthomonas axonopodis pv. citri (strain 306).